The following is a 181-amino-acid chain: Adenine phosphoribosyltransferase (181 aa).

This sequence belongs to the purine/pyrimidine phosphoribosyltransferase family. As to quaternary structure, homodimer.

It localises to the cytoplasm. The enzyme catalyses AMP + diphosphate = 5-phospho-alpha-D-ribose 1-diphosphate + adenine. Its pathway is purine metabolism; AMP biosynthesis via salvage pathway; AMP from adenine: step 1/1. Its function is as follows. Catalyzes a salvage reaction resulting in the formation of AMP, that is energically less costly than de novo synthesis. The sequence is that of Adenine phosphoribosyltransferase from Vibrio vulnificus (strain CMCP6).